The sequence spans 312 residues: Formimidoylglutamase (312 aa).

Positions 128, 153, 155, 157, 240, and 242 each coordinate Mn(2+).

This sequence belongs to the arginase family. Requires Mn(2+) as cofactor.

It carries out the reaction N-formimidoyl-L-glutamate + H2O = formamide + L-glutamate. It functions in the pathway amino-acid degradation; L-histidine degradation into L-glutamate; L-glutamate from N-formimidoyl-L-glutamate (hydrolase route): step 1/1. Catalyzes the conversion of N-formimidoyl-L-glutamate to L-glutamate and formamide. The protein is Formimidoylglutamase of Enterobacter sp. (strain 638).